Reading from the N-terminus, the 884-residue chain is DNA mismatch repair protein MutS (884 aa).

651-658 lines the ATP pocket; it reads GPNMSGKS. Residues 843–884 are disordered; it reads LRNQGKSQPAQKNCKKEPAPNRSPDPAVGDQLSLIPAPLFPD.

Belongs to the DNA mismatch repair MutS family.

Its function is as follows. This protein is involved in the repair of mismatches in DNA. It is possible that it carries out the mismatch recognition step. This protein has a weak ATPase activity. The chain is DNA mismatch repair protein MutS from Synechococcus sp. (strain JA-2-3B'a(2-13)) (Cyanobacteria bacterium Yellowstone B-Prime).